A 1960-amino-acid polypeptide reads, in one-letter code: Zinc finger protein 638 (1960 aa).

The tract at residues 1 to 137 (MSRPRFNPRG…SPKVQSRYTK (137 aa)) is disordered. A compositionally biased stretch (pro residues) spans 19–31 (APNPPGMRPPGPF). Asymmetric dimethylarginine occurs at positions 47, 49, and 54. A compositionally biased stretch (polar residues) spans 60–75 (SYQNMGPQRMNVQVTQ). Residues 76 to 89 (HRTDPRLTKEKLDF) are compositionally biased toward basic and acidic residues. The span at 117 to 137 (KQSSVTQVTEQSPKVQSRYTK) shows a compositional bias: polar residues. A phosphoserine mark is found at Ser128 and Ser288. Lys291 participates in a covalent cross-link: Glycyl lysine isopeptide (Lys-Gly) (interchain with G-Cter in SUMO2). Ser298, Ser367, Ser381, and Ser418 each carry phosphoserine. The disordered stretch occupies residues 352–373 (KSVISSADAHGGPTESKKDYQS). Disordered regions lie at residues 463–673 (NPEI…QSLS), 749–804 (PGKK…STVK), and 827–899 (KASI…KESE). Over residues 468–483 (PSRRNESNRKENETPR) the composition is skewed to basic and acidic residues. The tract at residues 470–573 (RRNESNRKEN…ERTSRKSVRS (104 aa)) is involved in localization to nuclear speckles. Residues 484–556 (RRSHSPSPRH…SRNLLRRSPK (73 aa)) are compositionally biased toward basic residues. Phosphoserine is present on Ser554. Basic and acidic residues-rich tracts occupy residues 565–583 (RTSRKSVRSDRKKALEDGG) and 591–602 (EVTKQKHTETVD). Phosphoserine is present on residues Ser606 and Ser615. The span at 618–628 (KPSAKSLSSVK) shows a compositional bias: low complexity. At Ser637 the chain carries Phosphoserine. In terms of domain architecture, RRM 1 spans 676 to 751 (SILLVSELPE…KSVKVCVPGK (76 aa)). Basic and acidic residues predominate over residues 755 to 782 (QNKEMKKKPSDIKKSSASALKKETDASK). Residue Lys775 forms a Glycyl lysine isopeptide (Lys-Gly) (interchain with G-Cter in SUMO2) linkage. A compositionally biased stretch (low complexity) spans 783-802 (TMETVSSSSSAKSGQIKSST). Basic and acidic residues-rich tracts occupy residues 838 to 854 (KSLEAKKSGNIKNKDSN), 867 to 879 (ASSEDKATGKSAE), and 888 to 899 (ATEKEPVNKESE). The RRM 2 domain maps to 902–976 (SVVFISNLPN…NQLSISMAPE (75 aa)). Residues 1082–1092 (SEVQRKNDLEL) are compositionally biased toward basic and acidic residues. Disordered regions lie at residues 1082 to 1151 (SEVQ…EEPK), 1396 to 1420 (TVVSSPKAKSTPSKTESHSTFPKPV), 1442 to 1462 (TRSGLAESNSKSKPTQIGVNR), 1484 to 1527 (TKQS…KSKE), and 1550 to 1583 (PSQAKQNPLKGKRKEALKISPSPELNLKKKKGKT). At Ser1099 the chain carries Phosphoserine. Residues 1140–1151 (VHQEELGKEEPK) show a composition bias toward basic and acidic residues. A compositionally biased stretch (low complexity) spans 1399–1409 (SSPKAKSTPSK). The residue at position 1400 (Ser1400) is a Phosphoserine. Residues 1442-1459 (TRSGLAESNSKSKPTQIG) show a composition bias toward polar residues. Basic and acidic residues-rich tracts occupy residues 1484–1503 (TKQSQETETKPPIMKRDDSN) and 1518–1527 (TTDRSSKSKE). 2 positions are modified to phosphoserine: Ser1635 and Ser1661. 2 disordered regions span residues 1763-1898 (EVGD…SDVP) and 1930-1960 (KSTRHKQNTEKFMAKQRKEKEQNETEERSSR). Positions 1772 to 1790 (NDSKVELARGKIEHHTDKK) are enriched in basic and acidic residues. Lys1804 is covalently cross-linked (Glycyl lysine isopeptide (Lys-Gly) (interchain with G-Cter in SUMO2)). A compositionally biased stretch (polar residues) spans 1806 to 1818 (DSFSQVGPGSETV). Over residues 1819–1831 (TQKDLKTMPERHL) the composition is skewed to basic and acidic residues. Ser1864 carries the phosphoserine modification. Over residues 1870-1885 (AELKDSEPDEKRRKTQ) the composition is skewed to basic and acidic residues. Residues 1876–1906 (EPDEKRRKTQDSSVGKSMTSDVPGDLDFLVP) form a Matrin-type zinc finger. Residues 1886-1895 (DSSVGKSMTS) show a composition bias toward polar residues. Residues 1936-1960 (QNTEKFMAKQRKEKEQNETEERSSR) are compositionally biased toward basic and acidic residues.

In terms of assembly, interacts with FHL2. Interacts with CEBPA, CEBPD and CEBPG. Interacts with MPHOSPH8 and TASOR components of the HUSH complex; leading to recruitment of the HUSH complex. Interacts with SETDB1. Interacts with HDAC1. Interacts with HDAC4.

The protein localises to the nucleus speckle. Functionally, transcription factor that binds to cytidine clusters in double-stranded DNA. Plays a key role in the silencing of unintegrated retroviral DNA: some part of the retroviral DNA formed immediately after infection remains unintegrated in the host genome and is transcriptionally repressed. Mediates transcriptional repression of unintegrated viral DNA by specifically binding to the cytidine clusters of retroviral DNA and mediating the recruitment of chromatin silencers, such as the HUSH complex, SETDB1 and the histone deacetylases HDAC1 and HDAC4. Acts as an early regulator of adipogenesis by acting as a transcription cofactor of CEBPs (CEBPA, CEBPD and/or CEBPG), controlling the expression of PPARG and probably of other proadipogenic genes, such as SREBF1. May also regulate alternative splicing of target genes during adipogenesis. The protein is Zinc finger protein 638 of Mus musculus (Mouse).